We begin with the raw amino-acid sequence, 278 residues long: S-formylglutathione hydrolase YeiG (278 aa).

Catalysis depends on charge relay system residues Ser145, Asp223, and His256.

Belongs to the esterase D family.

It carries out the reaction S-formylglutathione + H2O = formate + glutathione + H(+). In terms of biological role, serine hydrolase involved in the detoxification of formaldehyde. Hydrolyzes S-formylglutathione to glutathione and formate. This chain is S-formylglutathione hydrolase YeiG (yeiG), found in Shigella dysenteriae serotype 1 (strain Sd197).